Reading from the N-terminus, the 311-residue chain is Catechol 1,2-dioxygenase (311 aa).

Y164 is a binding site for catechol. Fe cation is bound by residues Y164, Y200, H224, and H226. A catechol-binding site is contributed by 224-226; the sequence is HIH.

Belongs to the intradiol ring-cleavage dioxygenase family. Homodimer. Fe(3+) serves as cofactor.

The enzyme catalyses catechol + O2 = cis,cis-muconate + 2 H(+). The protein operates within aromatic compound metabolism; beta-ketoadipate pathway; 5-oxo-4,5-dihydro-2-furylacetate from catechol: step 1/3. This Acinetobacter baylyi (strain ATCC 33305 / BD413 / ADP1) protein is Catechol 1,2-dioxygenase.